Reading from the N-terminus, the 234-residue chain is Ribosomal RNA small subunit methyltransferase G (234 aa).

S-adenosyl-L-methionine-binding residues include Gly-85, Phe-90, and Arg-155.

Belongs to the methyltransferase superfamily. RNA methyltransferase RsmG family.

It localises to the cytoplasm. It carries out the reaction guanosine(527) in 16S rRNA + S-adenosyl-L-methionine = N(7)-methylguanosine(527) in 16S rRNA + S-adenosyl-L-homocysteine. Functionally, specifically methylates the N7 position of guanine in position 527 of 16S rRNA. This is Ribosomal RNA small subunit methyltransferase G from Rhodopseudomonas palustris (strain BisB18).